The following is a 324-amino-acid chain: 4-hydroxyphenylpyruvate 3-dimethylallyltransferase (324 aa).

Substrate is bound by residues Arg160 and Glu281.

It belongs to the aromatic prenyltransferase family. As to quaternary structure, monomer.

The enzyme catalyses 3-(4-hydroxyphenyl)pyruvate + dimethylallyl diphosphate = 3-dimethylallyl-4-hydroxyphenylpyruvate + diphosphate. It participates in antibiotic biosynthesis. Magnesium-independent aromatic prenyltransferase that catalyzes the irreversible transfer of a dimethylallyl group to 4-hydroxyphenylpyruvate to produce the ring A structure in the clorobiocin biosynthesis pathway. Clorobiocin is an aminocoumarin family antibiotic. The sequence is that of 4-hydroxyphenylpyruvate 3-dimethylallyltransferase from Streptomyces roseochromogenus subsp. oscitans.